A 706-amino-acid chain; its full sequence is Alpha-hemolysin translocation ATP-binding protein HlyB (706 aa).

One can recognise a Peptidase C39 domain in the interval 1-125 (MMSKCSSHNS…KLYQGKVILV (125 aa)). Histidine 83 is an active-site residue. Helical transmembrane passes span 153-173 (ILLEVLTVSAFIQFLALITPL), 191-211 (LNIITIAFIIVILFEVILTGA), 269-289 (ALTSVLDLFFSVIFFCVMWYY), 295-315 (LVILLSLPCYVIWSLFISPLL), and 388-408 (VMVISLWMGAHLVISGEISIG). Residues 154–436 (LLEVLTVSAF…LAHLWQDFQQ (283 aa)) enclose the ABC transmembrane type-1 domain. The 236-residue stretch at 468-703 (IEFKNVRFRY…KDSLYAYLYQ (236 aa)) folds into the ABC transporter domain. 502–509 (GRSGSGKS) contacts ATP.

This sequence belongs to the ABC transporter superfamily. Protein-1 exporter (TC 3.A.1.109) family. As to quaternary structure, homodimer.

Its subcellular location is the cell inner membrane. Functionally, part of the ABC transporter complex HlyBD involved in hemolysin export. Transmembrane domains (TMD) form a pore in the inner membrane and the ATP-binding domain (NBD) is responsible for energy generation. The chain is Alpha-hemolysin translocation ATP-binding protein HlyB (hlyB) from Escherichia coli O157:H7.